The chain runs to 331 residues: Ketol-acid reductoisomerase (NADP(+)) (331 aa).

The region spanning alanine 2–threonine 182 is the KARI N-terminal Rossmann domain. Residues phenylalanine 25–glutamine 28, serine 51, serine 53, and aspartate 83–glutamine 86 each bind NADP(+). Histidine 108 is an active-site residue. Glycine 134 is a binding site for NADP(+). In terms of domain architecture, KARI C-terminal knotted spans threonine 183–isoleucine 328. 4 residues coordinate Mg(2+): aspartate 191, glutamate 195, glutamate 227, and glutamate 231. Serine 252 serves as a coordination point for substrate.

It belongs to the ketol-acid reductoisomerase family. Requires Mg(2+) as cofactor.

The enzyme catalyses (2R)-2,3-dihydroxy-3-methylbutanoate + NADP(+) = (2S)-2-acetolactate + NADPH + H(+). It catalyses the reaction (2R,3R)-2,3-dihydroxy-3-methylpentanoate + NADP(+) = (S)-2-ethyl-2-hydroxy-3-oxobutanoate + NADPH + H(+). It functions in the pathway amino-acid biosynthesis; L-isoleucine biosynthesis; L-isoleucine from 2-oxobutanoate: step 2/4. Its pathway is amino-acid biosynthesis; L-valine biosynthesis; L-valine from pyruvate: step 2/4. Involved in the biosynthesis of branched-chain amino acids (BCAA). Catalyzes an alkyl-migration followed by a ketol-acid reduction of (S)-2-acetolactate (S2AL) to yield (R)-2,3-dihydroxy-isovalerate. In the isomerase reaction, S2AL is rearranged via a Mg-dependent methyl migration to produce 3-hydroxy-3-methyl-2-ketobutyrate (HMKB). In the reductase reaction, this 2-ketoacid undergoes a metal-dependent reduction by NADPH to yield (R)-2,3-dihydroxy-isovalerate. The protein is Ketol-acid reductoisomerase (NADP(+)) of Thermoanaerobacter sp. (strain X514).